A 577-amino-acid polypeptide reads, in one-letter code: Proline--tRNA ligase (577 aa).

Belongs to the class-II aminoacyl-tRNA synthetase family. ProS type 1 subfamily. In terms of assembly, homodimer.

Its subcellular location is the cytoplasm. It catalyses the reaction tRNA(Pro) + L-proline + ATP = L-prolyl-tRNA(Pro) + AMP + diphosphate. Its function is as follows. Catalyzes the attachment of proline to tRNA(Pro) in a two-step reaction: proline is first activated by ATP to form Pro-AMP and then transferred to the acceptor end of tRNA(Pro). As ProRS can inadvertently accommodate and process non-cognate amino acids such as alanine and cysteine, to avoid such errors it has two additional distinct editing activities against alanine. One activity is designated as 'pretransfer' editing and involves the tRNA(Pro)-independent hydrolysis of activated Ala-AMP. The other activity is designated 'posttransfer' editing and involves deacylation of mischarged Ala-tRNA(Pro). The misacylated Cys-tRNA(Pro) is not edited by ProRS. The chain is Proline--tRNA ligase from Thermotoga sp. (strain RQ2).